The primary structure comprises 348 residues: MQNNNPCGLDGFAFLEFSGPDRNKLHQQFSEMGFQAVAHHKNQDITLFKQGEIQFIVNAASHCQAEAHASTHGPGACAMGFKVKDAKAAFQHAIAHGGIAFQDAPHANHGLPAIQAIGGSVIYFVDEEHQPFSHEWNITSPEPVVGNGLTAIDHLTHNVYRGNMDKWASFYASIFNFQEIRFFNIKGKMTGLVSRALGSPCGKIKIPLNESKDDLSQIEEFLHEYHGEGIQHIALNTNDIYKTVNGLRKQGVKFLDVPDTYYEMINDRLPWHKEPLNQLHAEKILIDGEADPKDGLLLQIFTENIFGPVFFEIIQRKGNQGFGEGNFQALFEAIERDQVRRGTLKELS.

VOC domains lie at 11–141 and 151–303; these read GFAF…ITSP and AIDH…IFTE. Positions 154, 232, and 312 each coordinate Fe cation.

The protein belongs to the 4HPPD family. The cofactor is Fe cation.

It carries out the reaction 3-(4-hydroxyphenyl)pyruvate + O2 = homogentisate + CO2. In terms of biological role, catalyzes the transformation of p-hydroxyphenylpyruvate into HGA. Has hemolytic and brown pigment production activity. This is 4-hydroxyphenylpyruvate dioxygenase (lly) from Legionella pneumophila subsp. pneumophila (strain Philadelphia 1 / ATCC 33152 / DSM 7513).